The primary structure comprises 1905 residues: Low-density lipoprotein receptor-related protein 4 (1905 aa).

The first 20 residues, 1 to 20, serve as a signal peptide directing secretion; sequence MRRWWGALLLGALLCAHGTA. At 21-1723 the chain is on the extracellular side; the sequence is SNLECACGRS…VPAAPGEGLH (1703 aa). LDL-receptor class A domains lie at 26-67, 70-106, 109-144, 147-183, 190-226, 230-266, 269-305, and 311-350; these read ACGR…DGCT, TCSPLDFHCDNGKCIRRSWVCDGDNDCEDDSDEQDCP, ECEEDEFPCQNGYCIRSLWHCDGDNDCGDNSDEQCD, KCSDKEFRCSDGSCIAEHWYCDGDTDCKDGSDEESCP, PCNLEEFQCAYGRCILDIYHCDGDDDCGDWSDESDCS, PCRSGEFMCDSGLCVNAGWRCDGDADCDDQSDERNCT, MCTAEQFRCRSGRCVRLSWRCDGEDDCADNSDEENCE, and QCASDQFLCWNGRCIGQRKLCNGVNDCGDNSDESPQQNCR. 30 disulfide bridges follow: Cys-27/Cys-44, Cys-34/Cys-57, Cys-51/Cys-66, Cys-71/Cys-83, Cys-78/Cys-96, Cys-90/Cys-105, Cys-110/Cys-122, Cys-117/Cys-135, Cys-129/Cys-143, Cys-148/Cys-160, Cys-155/Cys-173, Cys-167/Cys-182, Cys-191/Cys-203, Cys-198/Cys-216, Cys-210/Cys-225, Cys-231/Cys-243, Cys-238/Cys-256, Cys-250/Cys-265, Cys-270/Cys-282, Cys-277/Cys-295, Cys-289/Cys-304, Cys-312/Cys-324, Cys-319/Cys-337, Cys-331/Cys-349, Cys-358/Cys-369, Cys-365/Cys-378, Cys-380/Cys-393, Cys-399/Cys-409, Cys-405/Cys-418, and Cys-420/Cys-433. Asn-264 is a glycosylation site (N-linked (GlcNAc...) asparagine). In terms of domain architecture, EGF-like 1; atypical spans 354 to 394; it reads GEENCNVNNGGCAQKCQMIRGAVQCTCHTGYRLTEDGRTCQ. The EGF-like 2; calcium-binding domain maps to 395-434; that stretch reads DVNECAEEGYCSQGCTNSEGAFQCWCEAGYELRPDRRSCK. LDL-receptor class B repeat units follow at residues 480–522, 523–565, 566–609, 610–652, and 653–693; these read ELVF…DWVH, DKLY…HPME, GTIY…DYAG, RRMY…FEDS, and LYWT…LHPQ. A glycan (N-linked (GlcNAc...) asparagine) is linked at Asn-498. The EGF-like 3 domain maps to 698–737; sequence GKNRCGDNNGGCTHLCLPSGQNYTCACPTGFRKINSHACA. 3 cysteine pairs are disulfide-bonded: Cys-702-Cys-713, Cys-709-Cys-722, and Cys-724-Cys-736. A glycan (N-linked (GlcNAc...) asparagine) is linked at Asn-719. LDL-receptor class B repeat units lie at residues 785 to 827, 828 to 870, 871 to 914, 915 to 956, and 957 to 998; these read DHVY…DWVT, NKLY…EPMG, GYMY…DYGS, QRLY…LYGQ, and RIYW…FHRQ. Asn-901 is a glycosylation site (N-linked (GlcNAc...) asparagine). Asn-1077 carries N-linked (GlcNAc...) asparagine glycosylation. 10 LDL-receptor class B repeats span residues 1093 to 1135, 1136 to 1178, 1179 to 1222, 1223 to 1263, 1264 to 1306, 1397 to 1439, 1440 to 1482, 1483 to 1526, 1527 to 1568, and 1569 to 1610; these read GKVY…DAIG, RKVY…YHEM, GFMY…DKTS, SQLL…LLDS, YIYW…DRAQ, GKVY…DWVA, RNLY…FPRK, GYLF…DYDT, RRIY…QDRW, and IYWT…SPQR. Residues Asn-1415 and Asn-1467 are each glycosylated (N-linked (GlcNAc...) asparagine). The disordered stretch occupies residues 1659–1696; the sequence is PRATSLNEKSPVLPNTLPTTLHSSTTRTRTSPEGAEGR. Low complexity predominate over residues 1671–1690; it reads LPNTLPTTLHSSTTRTRTSP. Residues 1724-1746 form a helical membrane-spanning segment; the sequence is VSYAVGGLLSVLLILLVTAALML. The Cytoplasmic portion of the chain corresponds to 1747–1905; sequence YRHRKSKFTD…ERKLSSESQV (159 aa). Residues 1853–1905 form a disordered region; sequence SSGSLDDTETEQLLQEEQSECSSVHTATTPERRGSLPDTGWKHERKLSSESQV. Polar residues predominate over residues 1872–1881; sequence ECSSVHTATT. The span at 1882–1905 shows a compositional bias: basic and acidic residues; the sequence is PERRGSLPDTGWKHERKLSSESQV.

Belongs to the LDLR family. As to quaternary structure, homooligomer. Interacts with MUSK; the heterodimer forms an AGRIN receptor complex that binds AGRIN resulting in activation of MUSK. Interacts (via the extracellular domain) with SOST; the interaction facilitates the inhibition of Wnt signaling. Interacts with MESD; the interaction promotes glycosylation of LRP4 and its cell-surface expression. Post-translationally, N-glycosylation is required for cell surface location. As to expression, expressed in different regions of the brain, mainly in the olfactory bulb, at lower level in the cerebral cortex and hippocampus.

Its subcellular location is the cell membrane. In terms of biological role, mediates SOST-dependent inhibition of bone formation. Functions as a specific facilitator of SOST-mediated inhibition of Wnt signaling. Plays a key role in the formation and the maintenance of the neuromuscular junction (NMJ), the synapse between motor neuron and skeletal muscle. Directly binds AGRIN and recruits it to the MUSK signaling complex. Mediates the AGRIN-induced phosphorylation of MUSK, the kinase of the complex. The activation of MUSK in myotubes induces the formation of NMJ by regulating different processes including the transcription of specific genes and the clustering of AChR in the postsynaptic membrane. Alternatively, may be involved in the negative regulation of the canonical Wnt signaling pathway, being able to antagonize the LRP6-mediated activation of this pathway. More generally, has been proposed to function as a cell surface endocytic receptor binding and internalizing extracellular ligands for degradation by lysosomes. Plays an essential role in the process of digit differentiation. This is Low-density lipoprotein receptor-related protein 4 (Lrp4) from Rattus norvegicus (Rat).